Consider the following 219-residue polypeptide: Lipid transferase CIDEB (219 aa).

The CIDE-N domain maps to 33–110 (PRQRPFRVCD…VLELGQSWSP (78 aa)).

Belongs to the CIDE family. As to quaternary structure, interacts with DFFA. Interacts with DFFB; inhibited by DFFB. Interacts with APOB. Interacts with PREB/SEC12; facilitating loading of SCAP-SREBP into COPII vesicles.

It is found in the lipid droplet. The protein localises to the endoplasmic reticulum membrane. Its subcellular location is the golgi apparatus. It localises to the cytoplasmic vesicle. The protein resides in the COPI-coated vesicle. In terms of biological role, lipid transferase specifically expressed in hepatocytes, which promotes unilocular lipid droplet formation by mediating lipid droplet fusion. Lipid droplet fusion promotes their enlargement, restricting lipolysis and favoring lipid storage. Localizes on the lipid droplet surface, at focal contact sites between lipid droplets, and mediates atypical lipid droplet fusion by promoting directional net neutral lipid transfer from the smaller to larger lipid droplets. The transfer direction may be driven by the internal pressure difference between the contacting lipid droplet pair. Promotes lipid exchange and lipid droplet fusion in both small and large lipid droplet-containing hepatocytes. In addition to its role in lipid droplet fusion, also involved in cytoplasmic vesicle biogenesis and transport. Required for very-low-density lipoprotein (VLDL) lipidation and maturation. Probably involved in the biogenesis of VLDL transport vesicles by forming a COPII vesicle coat and facilitating the formation of endoplasmic reticulum-derived large vesicles. Also involved in sterol-regulated export of the SCAP-SREBP complex, composed of SCAP, SREBF1/SREBP1 and SREBF2/SREBP2, by promoting loading of SCAP-SREBP into COPII vesicles. May also activate apoptosis. The protein is Lipid transferase CIDEB (CIDEB) of Bos taurus (Bovine).